A 105-amino-acid chain; its full sequence is Large ribosomal subunit protein uL24 (105 aa).

The protein belongs to the universal ribosomal protein uL24 family. In terms of assembly, part of the 50S ribosomal subunit.

Its function is as follows. One of two assembly initiator proteins, it binds directly to the 5'-end of the 23S rRNA, where it nucleates assembly of the 50S subunit. In terms of biological role, one of the proteins that surrounds the polypeptide exit tunnel on the outside of the subunit. This Clostridium botulinum (strain Langeland / NCTC 10281 / Type F) protein is Large ribosomal subunit protein uL24.